The sequence spans 293 residues: Nucleotide-binding protein BC_5156 (293 aa).

14-21 (GMSGAGKT) is a binding site for ATP. Residue 65-68 (DLRG) coordinates GTP.

Belongs to the RapZ-like family.

Displays ATPase and GTPase activities. The sequence is that of Nucleotide-binding protein BC_5156 from Bacillus cereus (strain ATCC 14579 / DSM 31 / CCUG 7414 / JCM 2152 / NBRC 15305 / NCIMB 9373 / NCTC 2599 / NRRL B-3711).